The chain runs to 74 residues: MDSEVQRDGRILDLIDDAWREDKLPYEDVAIPLNELPDPEQDNGGTTESVKEQEMKWTDLALQYLHENVPPIGN.

The segment at 33–53 is disordered; that stretch reads LNELPDPEQDNGGTTESVKEQ.

This sequence belongs to the APC13 family. In terms of assembly, the mammalian APC/C is composed at least of 14 distinct subunits ANAPC1, ANAPC2, CDC27/APC3, ANAPC4, ANAPC5, CDC16/APC6, ANAPC7, CDC23/APC8, ANAPC10, ANAPC11, CDC26/APC12, ANAPC13, ANAPC15 and ANAPC16 that assemble into a complex of at least 19 chains with a combined molecular mass of around 1.2 MDa; APC/C interacts with FZR1 and FBXO5.

The protein resides in the nucleus. It functions in the pathway protein modification; protein ubiquitination. Component of the anaphase promoting complex/cyclosome (APC/C), a cell cycle-regulated E3 ubiquitin ligase that controls progression through mitosis and the G1 phase of the cell cycle. The APC/C complex acts by mediating ubiquitination and subsequent degradation of target proteins: it mainly mediates the formation of 'Lys-11'-linked polyubiquitin chains and, to a lower extent, the formation of 'Lys-48'- and 'Lys-63'-linked polyubiquitin chains. The APC/C complex catalyzes assembly of branched 'Lys-11'-/'Lys-48'-linked branched ubiquitin chains on target proteins. This is Anaphase-promoting complex subunit 13 (ANAPC13) from Pongo abelii (Sumatran orangutan).